A 179-amino-acid chain; its full sequence is Large ribosomal subunit protein uL5c (179 aa).

It belongs to the universal ribosomal protein uL5 family. Part of the 50S ribosomal subunit; contacts the 5S rRNA.

The protein resides in the plastid. The protein localises to the organellar chromatophore. In terms of biological role, binds 5S rRNA, forms part of the central protuberance of the 50S subunit. The polypeptide is Large ribosomal subunit protein uL5c (rpl5) (Paulinella chromatophora).